Reading from the N-terminus, the 258-residue chain is Heat-labile enterotoxin A chain (258 aa).

The N-terminal stretch at 1–18 is a signal peptide; that stretch reads MKNITFIFFILLASPLYA. 25 to 39 is a binding site for NAD(+); sequence RADSRPPDEIKRSGG. Glu128 is a catalytic residue. The cysteines at positions 205 and 217 are disulfide-linked.

It belongs to the enterotoxin A family. As to quaternary structure, heterohexamer of one A chain and of five B chains.

In terms of biological role, the biological activity of the toxin is produced by the A chain, which activates intracellular adenyl cyclase. The sequence is that of Heat-labile enterotoxin A chain (eltA) from Escherichia coli O78:H11 (strain H10407 / ETEC).